The chain runs to 264 residues: Diphthine synthase (264 aa).

S-adenosyl-L-methionine contacts are provided by residues Leu10, Asp87, Val90, 115–116, Leu166, Ala209, and His234; that span reads SI.

This sequence belongs to the diphthine synthase family. Homodimer.

It carries out the reaction 2-[(3S)-amino-3-carboxypropyl]-L-histidyl-[translation elongation factor 2] + 3 S-adenosyl-L-methionine = diphthine-[translation elongation factor 2] + 3 S-adenosyl-L-homocysteine + 3 H(+). It participates in protein modification; peptidyl-diphthamide biosynthesis. In terms of biological role, S-adenosyl-L-methionine-dependent methyltransferase that catalyzes the trimethylation of the amino group of the modified target histidine residue in translation elongation factor 2 (EF-2), to form an intermediate called diphthine. The three successive methylation reactions represent the second step of diphthamide biosynthesis. This Thermococcus onnurineus (strain NA1) protein is Diphthine synthase.